Here is a 149-residue protein sequence, read N- to C-terminus: Ribonuclease H (149 aa).

One can recognise an RNase H type-1 domain in the interval 4–145; the sequence is QRGVVEAFTD…ADALANQGID (142 aa). Residues Asp13, Glu51, Asp73, and Asp137 each coordinate Mg(2+).

This sequence belongs to the RNase H family. As to quaternary structure, monomer. Mg(2+) serves as cofactor.

The protein localises to the cytoplasm. It carries out the reaction Endonucleolytic cleavage to 5'-phosphomonoester.. Endonuclease that specifically degrades the RNA of RNA-DNA hybrids. The polypeptide is Ribonuclease H (Halorhodospira halophila (strain DSM 244 / SL1) (Ectothiorhodospira halophila (strain DSM 244 / SL1))).